The primary structure comprises 310 residues: Small ribosomal subunit biogenesis GTPase RsgA (310 aa).

The CP-type G domain maps to L77–F238. GTP is bound by residues N126–D129 and G180–T188. C262, C267, H269, and C275 together coordinate Zn(2+).

This sequence belongs to the TRAFAC class YlqF/YawG GTPase family. RsgA subfamily. Monomer. Associates with 30S ribosomal subunit, binds 16S rRNA. It depends on Zn(2+) as a cofactor.

The protein localises to the cytoplasm. In terms of biological role, one of several proteins that assist in the late maturation steps of the functional core of the 30S ribosomal subunit. Helps release RbfA from mature subunits. May play a role in the assembly of ribosomal proteins into the subunit. Circularly permuted GTPase that catalyzes slow GTP hydrolysis, GTPase activity is stimulated by the 30S ribosomal subunit. This is Small ribosomal subunit biogenesis GTPase RsgA from Phocaeicola vulgatus (strain ATCC 8482 / DSM 1447 / JCM 5826 / CCUG 4940 / NBRC 14291 / NCTC 11154) (Bacteroides vulgatus).